Reading from the N-terminus, the 336-residue chain is Probable long-chain-alcohol O-fatty-acyltransferase 8 (336 aa).

8 helical membrane-spanning segments follow: residues 7–27 (SFVKVWGSAIISVSYCYYIPS), 38–58 (SVLPVCVLFLVLPLFFVFTIF), 59–79 (SSTTAFCLSILANFKLILFAF), 82–102 (GPLLPLPANLFRFICFTCLPI), 117–135 (WVFFCKAAIFGVLLNVHNY), 152–172 (LYLVLDVLLTIVNALLTIILG), 228–248 (MGCWTTFFVSGLIHELVYFYI), and 284–304 (PMLSRLITVGFLVVTGYFLFF).

The protein belongs to the wax synthase family.

It is found in the membrane. It catalyses the reaction a long chain fatty alcohol + a fatty acyl-CoA = a wax ester + CoA. Functionally, catalyzes the final step in the synthesis of long-chain linear esters (waxes). In Arabidopsis thaliana (Mouse-ear cress), this protein is Probable long-chain-alcohol O-fatty-acyltransferase 8.